We begin with the raw amino-acid sequence, 758 residues long: UPF0313 protein CV_1738 (758 aa).

The Radical SAM core domain occupies 377–642; it reads AWEMIKYSVN…VDVVRDGYRR (266 aa). [4Fe-4S] cluster is bound by residues Cys-391, Cys-395, and Cys-398. Residues 698–758 form a disordered region; the sequence is GAPMNRGKSP…KPGGKTSRSR (61 aa). Gly residues predominate over residues 727–737; sequence RGQGGQGGRPG.

It belongs to the UPF0313 family. The cofactor is [4Fe-4S] cluster.

The sequence is that of UPF0313 protein CV_1738 from Chromobacterium violaceum (strain ATCC 12472 / DSM 30191 / JCM 1249 / CCUG 213 / NBRC 12614 / NCIMB 9131 / NCTC 9757 / MK).